A 595-amino-acid chain; its full sequence is Merlin (595 aa).

Ser13 carries the phosphoserine modification. The region spanning 22–311 (FTVRIVTMDA…GNHDLFMRRR (290 aa)) is the FERM domain. Ser518 is modified (phosphoserine; by PAK).

Interacts with NHERF1, HGS and AGAP2. Interacts with SGSM3. Interacts (via FERM domain) with MPP1. Interacts with LAYN and WWC1. Interacts with the CUL4A-RBX1-DDB1-VprBP/DCAF1 E3 ubiquitin-protein ligase complex. The unphosphorylated form interacts (via FERM domain) with VPRBP/DCAF1. Interacts (via FERM domain) with NOP53; the interaction is direct. Interacts with SCHIP1; the interaction is direct. In terms of processing, phosphorylation of Ser-518 inhibits nuclear localization by disrupting the intramolecular association of the FERM domain with the C-terminal tail. Post-translationally, ubiquitinated by the CUL4A-RBX1-DDB1-DCAF1/VprBP E3 ubiquitin-protein ligase complex for ubiquitination and subsequent proteasome-dependent degradation. Phosphorylation of Ser-518 inhibits nuclear localization by disrupting the intramolecular association of the FERM domain with the C-terminal tail. The dephosphorylation of Ser-518 favors the interaction with NOP53.

It localises to the cell membrane. It is found in the cell projection. Its subcellular location is the cytoplasm. The protein resides in the cytoskeleton. The protein localises to the nucleus. Its function is as follows. Probable regulator of the Hippo/SWH (Sav/Wts/Hpo) signaling pathway, a signaling pathway that plays a pivotal role in tumor suppression by restricting proliferation and promoting apoptosis. Along with WWC1 can synergistically induce the phosphorylation of LATS1 and LATS2 and can probably function in the regulation of the Hippo/SWH (Sav/Wts/Hpo) signaling pathway. May act as a membrane stabilizing protein. May inhibit PI3 kinase by binding to AGAP2 and impairing its stimulating activity. Suppresses cell proliferation and tumorigenesis by inhibiting the CUL4A-RBX1-DDB1-VprBP/DCAF1 E3 ubiquitin-protein ligase complex. This chain is Merlin (NF2), found in Papio anubis (Olive baboon).